The primary structure comprises 177 residues: FCS-Like Zinc finger 1 (177 aa).

The segment covering 22–46 (SLSEMEAGFSGNNNNSNNHGNPQNG) has biased composition (low complexity). Disordered stretches follow at residues 22–49 (SLSEMEAGFSGNNNNSNNHGNPQNGVVS) and 134–177 (ERDE…VAAA). An FLZ-type zinc finger spans residues 96–140 (HFLDSCFLCKKPLGDNRDIYMYRGDTPFCSEECRQEQIERDEAKE). 2 stretches are compositionally biased toward basic and acidic residues: residues 134 to 143 (ERDEAKEKKQ) and 154 to 168 (RRKEQSSPTRSRDYA).

The protein belongs to the FLZ family. In terms of assembly, interacts with KIN10 and KIN11 via its FLZ-type zinc finger domain. Interacts with KINB1, KINB2 and KINB3 via its N-terminal part. Interacts with DSP3 and BBX21 via its FLZ-type zinc finger domain. Forms heterodimer with FLZ7 and FLZ15 in vitro.

It localises to the nucleus. The protein resides in the cytoplasm. May act as an adapter to facilitate the interaction of SnRK1 complex with effector proteins, conferring tissue- and stimulus-type specific differences in the SnRK1 regulation pathway. In Arabidopsis thaliana (Mouse-ear cress), this protein is FCS-Like Zinc finger 1.